The sequence spans 938 residues: TFIIH basal transcription factor complex helicase/translocase XPB subunit (938 aa).

A Helicase ATP-binding domain is found at 394–562; that stretch reads FRSGNKAHQG…DLRHLVGPKL (169 aa). ATP is bound at residue 407–414; it reads LPCGAGKT. Positions 515–518 match the DEVH box motif; the sequence is DEVH. The 155-residue stretch at 627–781 folds into the Helicase C-terminal domain; it reads WCTQALLEFH…SYRVLQSDMV (155 aa).

The protein belongs to the helicase family. RAD25/XPB subfamily. Component of the 7-subunit TFIIH core complex composed of XPB, XPD, SSL1, TFB1, TFB2, TFB4 and TFB5.

The catalysed reaction is Couples ATP hydrolysis with the unwinding of duplex DNA by translocating in the 3'-5' direction.. It catalyses the reaction ATP + H2O = ADP + phosphate + H(+). Its function is as follows. ATP-dependent 3'-5' DNA helicase/translocase; binds dsDNA rather than ssDNA, unzipping it in a translocase rather than classical helicase activity. Component of the general transcription factor IIH (TFIIH) core complex, involved in spliced leader RNA (SL RNA) gene transcription by RNA polymerase II. TFIIH has an essential role in transcription initiation. When the pre-initiation complex (PIC) has been established, TFIIH is required for promoter opening and promoter escape. The ATPase activity of XPB is required for promoter opening and promoter escape. The chain is TFIIH basal transcription factor complex helicase/translocase XPB subunit from Trypanosoma brucei brucei (strain 927/4 GUTat10.1).